A 235-amino-acid chain; its full sequence is Urease accessory protein UreF (235 aa).

This sequence belongs to the UreF family. As to quaternary structure, ureD, UreF and UreG form a complex that acts as a GTP-hydrolysis-dependent molecular chaperone, activating the urease apoprotein by helping to assemble the nickel containing metallocenter of UreC. The UreE protein probably delivers the nickel.

Its subcellular location is the cytoplasm. In terms of biological role, required for maturation of urease via the functional incorporation of the urease nickel metallocenter. This is Urease accessory protein UreF from Haemophilus influenzae (strain PittGG).